Here is a 358-residue protein sequence, read N- to C-terminus: Dynein axonemal assembly factor 10 (358 aa).

WD repeat units lie at residues 64–106 (EKPK…TPVY), 116–155 (NCID…TPVA), 163–206 (EAKR…VRWE), 208–250 (NIKN…PTKG), 258–298 (AHKS…QRSR), and 320–358 (LSTQ…LNRL).

In terms of assembly, interacts with PIH1D1; the interaction associates DNAAF10 with the R2TP complex. Interacts with several dynein axonemal assembly factors.

Its subcellular location is the dynein axonemal particle. Its function is as follows. Key assembly factor specifically required for the stability of axonemal dynein heavy chains in cytoplasm. The sequence is that of Dynein axonemal assembly factor 10 (dnaaf10) from Xenopus laevis (African clawed frog).